The following is a 616-amino-acid chain: Chaperone protein HscA (616 aa).

The protein belongs to the heat shock protein 70 family.

Functionally, chaperone involved in the maturation of iron-sulfur cluster-containing proteins. Has a low intrinsic ATPase activity which is markedly stimulated by HscB. Involved in the maturation of IscU. The protein is Chaperone protein HscA of Escherichia coli O45:K1 (strain S88 / ExPEC).